Here is a 579-residue protein sequence, read N- to C-terminus: DELLA protein RGA2 (579 aa).

The segment at 1–31 (MKRDLHQFQGPPDTRFPNHGTANTGSSSKDK) is disordered. Positions 45–49 (DELLA) match the DELLA motif motif. 2 stretches are compositionally biased toward low complexity: residues 149–162 (SSSS…NSQS) and 174–183 (SLVTGTTVTT). Positions 149–183 (SSSSSNQAGDNSQSTKRLKSCSSPDSLVTGTTVTT) are disordered. The region spanning 205–574 (VDSQENGVRL…RPLITTSAWK (370 aa)) is the GRAS domain. A leucine repeat I (LRI) region spans residues 212–266 (VRLVHALMACAEAIQNNDLSIAEALVKQIGFLAVSQAGAMRKVATYFAEALARRI). Residues 285-350 (QMHFYETCPY…GGPPVFRLTG (66 aa)) are VHIID. The VHIID signature appears at 316-320 (VHVID). A leucine repeat II (LRII) region spans residues 364 to 396 (EVGCKLAQLAEAIHVEFEYRGFVANSLADLDAS). A PFYRE region spans residues 408–495 (VAVNSVFELH…EVYLGKQICN (88 aa)). An LXXLL motif motif is present at residues 416–420 (LHKLL). Residues 498-574 (ACEGPDRVER…RPLITTSAWK (77 aa)) are SAW.

The protein belongs to the GRAS family. DELLA subfamily. In terms of processing, phosphorylated. Post-translationally, ubiquitinated. Upon GA application it is ubiquitinated, leading to its subsequent degradation.

It localises to the nucleus. In terms of biological role, probable transcriptional regulator that acts as a repressor of the gibberellin (GA) signaling pathway. Probably acts by participating in large multiprotein complexes that represses transcription of GA-inducible genes. Upon GA application, it is degraded by the proteasome, allowing the GA signaling pathway. The sequence is that of DELLA protein RGA2 (RGA2) from Brassica campestris (Field mustard).